A 377-amino-acid polypeptide reads, in one-letter code: Flap endonuclease 1 (377 aa).

The interval 1–104 (MGIQGLAKLL…GELAKRTERR (104 aa)) is N-domain. Asp34 is a Mg(2+) binding site. Arg47 and Arg70 together coordinate DNA. Positions 86, 158, 160, 179, and 181 each coordinate Mg(2+). The I-domain stretch occupies residues 122–253 (NIDKFSRRLV…KRSVDLIRQH (132 aa)). Glu158 lines the DNA pocket. Residues Gly231 and Asp233 each coordinate DNA. Asp233 provides a ligand contact to Mg(2+). The segment at 336-344 (TQGRLDSFF) is interaction with PCNA. The tract at residues 337–377 (QGRLDSFFKVLPSPANKRKLQDGKGSQNKKAKTGGKFKRPK) is disordered. Over residues 363-377 (QNKKAKTGGKFKRPK) the composition is skewed to basic residues.

The protein belongs to the XPG/RAD2 endonuclease family. FEN1 subfamily. Interacts with PCNA. Three molecules of FEN1 bind to one PCNA trimer with each molecule binding to one PCNA monomer. PCNA stimulates the nuclease activity without altering cleavage specificity. It depends on Mg(2+) as a cofactor. In terms of processing, phosphorylated. Phosphorylation upon DNA damage induces relocalization to the nuclear plasma.

It localises to the nucleus. The protein resides in the nucleolus. It is found in the nucleoplasm. Its subcellular location is the mitochondrion. In terms of biological role, structure-specific nuclease with 5'-flap endonuclease and 5'-3' exonuclease activities involved in DNA replication and repair. During DNA replication, cleaves the 5'-overhanging flap structure that is generated by displacement synthesis when DNA polymerase encounters the 5'-end of a downstream Okazaki fragment. It enters the flap from the 5'-end and then tracks to cleave the flap base, leaving a nick for ligation. Also involved in the long patch base excision repair (LP-BER) pathway, by cleaving within the apurinic/apyrimidinic (AP) site-terminated flap. Acts as a genome stabilization factor that prevents flaps from equilibrating into structures that lead to duplications and deletions. Also possesses 5'-3' exonuclease activity on nicked or gapped double-stranded DNA, and exhibits RNase H activity. Also involved in replication and repair of rDNA and in repairing mitochondrial DNA. This Nematostella vectensis (Starlet sea anemone) protein is Flap endonuclease 1.